Here is a 969-residue protein sequence, read N- to C-terminus: Defective in germ line development protein 3 (969 aa).

The segment at 34–81 (MAENAASARKLFVSSALKDIIVNPENFYHDFQQSAQMAEDANQRRQVS) is gld-2-binding. KH domains follow at residues 34–109 (MAEN…MIEI), 113–187 (RVTL…MRRN), 189–259 (HFTV…NEIL), 270–342 (FTLH…IMDL), and 344–419 (PISM…YQKV). The interval 57–471 (PENFYHDFQQ…GSNGRRHRSS (415 aa)) is gls-1-binding. Disordered stretches follow at residues 459–508 (LSDG…SFSE) and 602–711 (EQHR…GDIH). The segment covering 487–508 (KQFSESSGGPSRSHTRVSSFSE) has biased composition (polar residues). A compositionally biased stretch (low complexity) spans 631–644 (PSSSTGSYYPSTTP). A compositionally biased stretch (basic and acidic residues) spans 647–659 (RVYEQVREDDLRS). The segment covering 664–676 (RRTSVNGDDQNVE) has biased composition (polar residues). Basic and acidic residues-rich tracts occupy residues 677-687 (SMHDQGYERQY) and 694-711 (LQKD…GDIH). The segment at 769 to 969 (LYMHESPHND…DLSLDETSTY (201 aa)) is gls-1-binding. The segment at 860 to 949 (NGVTKTILEP…VLNEKEKEIA (90 aa)) is fbf-1-binding. A disordered region spans residues 950 to 969 (DKSIESTVTQDLSLDETSTY). Positions 954–969 (ESTVTQDLSLDETSTY) are enriched in polar residues.

As to quaternary structure, interacts (via its KH1 domain) with gld-2. Isoform A but not isoform B interacts specifically with fbf-1 and fbf-2 in an RNA-independent manner. Isoform A interacts with gls-1 isoform C. Expressed in the germline (at protein level). In adult hermaphrodites, first detected in the transition zone (TZ), weakly expressed in the early mitotic region and in pachytene germ cells, and becomes more abundantly expressed as germ cells enter diakinesis (at protein level). Expressed in primary spermatocytes, but not in secondary spermatocytes or adult sperm (at protein level).

Its subcellular location is the cytoplasm. It localises to the cytoplasmic granule. It is found in the perinuclear region. Required maternally for germline survival and embryogenesis. Forms a complex with gls-1 which promotes the oogenic cell fate by freeing the translational repressor fbf to repress sperm promoting factors. Promotes maturation of primary spermatocytes to mature sperm. Required during hermaphrodite development to promote sperm fate, which is critical for determining the normal number of sperm. Promotion of sperm fate is at the expense of oogenesis, possibly through the negative regulation of fbf. Required during male development for the continued production of sperm and inhibition of oogenesis. Together with gld-2, promotes the transition from mitosis to meiosis. Required for polyadenylation of neg-1 mRNA during embryogenesis. The protein is Defective in germ line development protein 3 of Caenorhabditis elegans.